The chain runs to 288 residues: Small ribosomal subunit protein uS9m (288 aa).

The segment at 269-288 (VERKKPGKKKARKMPTWVKR) is disordered.

It belongs to the universal ribosomal protein uS9 family.

The protein localises to the mitochondrion. This is Small ribosomal subunit protein uS9m (MRPS9) from Candida glabrata (strain ATCC 2001 / BCRC 20586 / JCM 3761 / NBRC 0622 / NRRL Y-65 / CBS 138) (Yeast).